Reading from the N-terminus, the 248-residue chain is Probable transcriptional regulatory protein RL3983 (248 aa).

It belongs to the TACO1 family.

The protein localises to the cytoplasm. The protein is Probable transcriptional regulatory protein RL3983 of Rhizobium johnstonii (strain DSM 114642 / LMG 32736 / 3841) (Rhizobium leguminosarum bv. viciae).